The following is a 576-amino-acid chain: Ecdysone receptor (576 aa).

The tract at residues 1–162 (MSLGARGYRR…GPAPRQQEEL (162 aa)) is modulating. The tract at residues 87–154 (CTMEQQQPQP…GEARRQKKGP (68 aa)) is disordered. Residues 91 to 106 (QQQPQPQQQPQQTQPL) show a composition bias toward low complexity. Positions 107–117 (PSMPLPMPPTT) are enriched in pro residues. 2 consecutive NR C4-type zinc fingers follow at residues 163 to 183 (CLVCGDRASGYHYNALTCEGC) and 199 to 223 (CKFGHACEMDIYMRRKCQECRLKKC). The nuclear receptor DNA-binding region spans 163–235 (CLVCGDRASG…VGMRPECVVP (73 aa)). The segment at 245 to 269 (EKKAQREKDKLPVSTTTVDDHMPPI) is disordered. Residues 314–548 (NQKSLIARLV…FLEEIWDVAD (235 aa)) form the NR LBD domain.

Belongs to the nuclear hormone receptor family. NR1 subfamily.

It localises to the nucleus. In terms of biological role, receptor for ecdysone. Binds to ecdysone response elements (ECRES). The polypeptide is Ecdysone receptor (EcR) (Heliothis virescens (Tobacco budworm moth)).